The sequence spans 160 residues: 17.9 kDa class II heat shock protein (160 aa).

In terms of domain architecture, sHSP spans 44–160 (DARAMAATPA…KPKTIQVQVA (117 aa)).

The protein belongs to the small heat shock protein (HSP20) family.

The protein resides in the cytoplasm. This is 17.9 kDa class II heat shock protein (HSP17.9) from Helianthus annuus (Common sunflower).